We begin with the raw amino-acid sequence, 381 residues long: Chorismate synthase (381 aa).

NADP(+)-binding residues include arginine 41 and arginine 47. FMN-binding positions include 127–129 (RAS), 247–248 (QA), glycine 291, 306–310 (KPIPT), and arginine 332.

It belongs to the chorismate synthase family. As to quaternary structure, homotetramer. The cofactor is FMNH2.

It carries out the reaction 5-O-(1-carboxyvinyl)-3-phosphoshikimate = chorismate + phosphate. The protein operates within metabolic intermediate biosynthesis; chorismate biosynthesis; chorismate from D-erythrose 4-phosphate and phosphoenolpyruvate: step 7/7. Catalyzes the anti-1,4-elimination of the C-3 phosphate and the C-6 proR hydrogen from 5-enolpyruvylshikimate-3-phosphate (EPSP) to yield chorismate, which is the branch point compound that serves as the starting substrate for the three terminal pathways of aromatic amino acid biosynthesis. This reaction introduces a second double bond into the aromatic ring system. In Anaeromyxobacter dehalogenans (strain 2CP-1 / ATCC BAA-258), this protein is Chorismate synthase.